Consider the following 643-residue polypeptide: RNA-binding protein MEX3D (643 aa).

Disordered regions lie at residues 1-48 (MPGS…DAAA) and 61-92 (GLGGARPGDEGMATRSADGATECGEDEPAPPD). The segment covering 18–34 (TAGDPGHPHPALAGAED) has biased composition (low complexity). The span at 83 to 92 (CGEDEPAPPD) shows a compositional bias: acidic residues. KH domains lie at 160 to 221 (MTEC…KREI) and 253 to 314 (QTTI…REEI). Disordered stretches follow at residues 357-427 (PHPG…GTAT), 471-505 (GAPAQPNTGTRRSSGGGAATTPRHSPTLPEPGGLS), and 519-583 (VGAV…APGP). A compositionally biased stretch (gly residues) spans 405 to 418 (GGSGNGGFTFGGDG). Threonine 491 is modified (phosphothreonine). Serine 495 carries the post-translational modification Phosphoserine. Composition is skewed to low complexity over residues 495–505 (SPTLPEPGGLS), 531–556 (LPPFSGSTTFSTTPSLPSTTLASSTL), and 567–583 (PSTTAANSSASTAAPGP). The segment at 592 to 632 (CVVCSEGEAMAALVPCGHNLFCMDCAVRICGKSEPECPACR) adopts an RING-type zinc-finger fold.

Its subcellular location is the cytoplasm. The protein localises to the nucleus. In terms of biological role, RNA binding protein, may be involved in post-transcriptional regulatory mechanisms. In Mus musculus (Mouse), this protein is RNA-binding protein MEX3D (Mex3d).